Here is a 213-residue protein sequence, read N- to C-terminus: ATP synthase peripheral stalk subunit OSCP, mitochondrial (213 aa).

Residues 1 to 23 (MAAPAVSGVSQQVRYFGTSVVRP) constitute a mitochondrion transit peptide. An SIFI-degron motif is present at residues 5–23 (AVSGVSQQVRYFGTSVVRP). N6-acetyllysine occurs at positions 54, 60, 70, and 73. K90 bears the N6-succinyllysine mark. An N6-acetyllysine; alternate mark is found at K158 and K162. N6-succinyllysine; alternate is present on residues K158 and K162. N6-acetyllysine occurs at positions 172, 176, and 192. At K199 the chain carries N6-succinyllysine.

It belongs to the ATPase delta chain family. In terms of assembly, component of the ATP synthase complex composed at least of ATP5F1A/subunit alpha, ATP5F1B/subunit beta, ATP5MC1/subunit c (homooctomer), MT-ATP6/subunit a, MT-ATP8/subunit 8, ATP5ME/subunit e, ATP5MF/subunit f, ATP5MG/subunit g, ATP5MK/subunit k, ATP5MJ/subunit j, ATP5F1C/subunit gamma, ATP5F1D/subunit delta, ATP5F1E/subunit epsilon, ATP5PF/subunit F6, ATP5PB/subunit b, ATP5PD/subunit d, ATP5PO/subunit OSCP. ATP synthase complex consists of a soluble F(1) head domain (subunits alpha(3) and beta(3)) - the catalytic core - and a membrane F(0) domain - the membrane proton channel (subunits c, a, 8, e, f, g, k and j). These two domains are linked by a central stalk (subunits gamma, delta, and epsilon) rotating inside the F1 region and a stationary peripheral stalk (subunits F6, b, d, and OSCP). In terms of processing, acetylation at Lys-162 decreases ATP production. Deacetylated by SIRT3. Post-translationally, in response to mitochondrial stress, the precursor protein is ubiquitinated by the SIFI complex in the cytoplasm before mitochondrial import, leading to its degradation. Within the SIFI complex, UBR4 initiates ubiquitin chain that are further elongated or branched by KCMF1.

The protein resides in the mitochondrion. Its subcellular location is the mitochondrion inner membrane. Functionally, subunit OSCP, of the mitochondrial membrane ATP synthase complex (F(1)F(0) ATP synthase or Complex V) that produces ATP from ADP in the presence of a proton gradient across the membrane which is generated by electron transport complexes of the respiratory chain. ATP synthase complex consist of a soluble F(1) head domain - the catalytic core - and a membrane F(1) domain - the membrane proton channel. These two domains are linked by a central stalk rotating inside the F(1) region and a stationary peripheral stalk. During catalysis, ATP synthesis in the catalytic domain of F(1) is coupled via a rotary mechanism of the central stalk subunits to proton translocation. In vivo, can only synthesize ATP although its ATP hydrolase activity can be activated artificially in vitro. Part of the complex F(0) domain. Part of the complex F(0) domain and the peripheric stalk, which acts as a stator to hold the catalytic alpha(3)beta(3) subcomplex and subunit a/ATP6 static relative to the rotary elements. In Callithrix jacchus (White-tufted-ear marmoset), this protein is ATP synthase peripheral stalk subunit OSCP, mitochondrial.